Consider the following 212-residue polypeptide: Vesicle transport protein SFT2C (212 aa).

Over 1 to 78 (MADLHRQLQD…TRGQRLVAGG (78 aa)) the chain is Cytoplasmic. A helical transmembrane segment spans residues 79-99 (LCLLLAALCFGLAALYAPVLL). Topologically, residues 100–104 (LRARK) are lumenal. A helical transmembrane segment spans residues 105–125 (FALLWSLGSVLAWASAALLRG). Topologically, residues 126–142 (GPACGRLLRGEETPSRS) are cytoplasmic. Residues 143-165 (TLGYAAALGATLYAALVLRSTVL) form a helical membrane-spanning segment. The Lumenal segment spans residues 166 to 174 (TALGACAQV). The chain crosses the membrane as a helical span at residues 175 to 197 (AALLYALIGLLPWGGVTALRLAL). Residues 198-212 (GRLNRGTGLANALPV) lie on the Cytoplasmic side of the membrane.

The protein belongs to the SFT2 family.

The protein localises to the membrane. Functionally, may be involved in fusion of retrograde transport vesicles derived from an endocytic compartment with the Golgi complex. The protein is Vesicle transport protein SFT2C of Mus musculus (Mouse).